A 499-amino-acid polypeptide reads, in one-letter code: Glycerol kinase (499 aa).

T15 contacts ADP. ATP contacts are provided by T15, T16, and S17. T15 lines the sn-glycerol 3-phosphate pocket. R19 is an ADP binding site. Residues R85, E86, Y137, and D246 each contribute to the sn-glycerol 3-phosphate site. Residues R85, E86, Y137, D246, and Q247 each contribute to the glycerol site. ADP contacts are provided by T268 and G311. ATP-binding residues include T268, G311, Q315, and G412. ADP is bound by residues G412 and N416.

It belongs to the FGGY kinase family.

It catalyses the reaction glycerol + ATP = sn-glycerol 3-phosphate + ADP + H(+). It participates in polyol metabolism; glycerol degradation via glycerol kinase pathway; sn-glycerol 3-phosphate from glycerol: step 1/1. Its activity is regulated as follows. Inhibited by fructose 1,6-bisphosphate (FBP). In terms of biological role, key enzyme in the regulation of glycerol uptake and metabolism. Catalyzes the phosphorylation of glycerol to yield sn-glycerol 3-phosphate. This Parabacteroides distasonis (strain ATCC 8503 / DSM 20701 / CIP 104284 / JCM 5825 / NCTC 11152) protein is Glycerol kinase.